The following is a 472-amino-acid chain: Putative cytochrome P450 135B1 (472 aa).

Heme is bound at residue C388. Residues 442–472 (RDVSATSQATAQGAGCPAARGGGPSRAVGSQ) are disordered. Over residues 452–472 (AQGAGCPAARGGGPSRAVGSQ) the composition is skewed to low complexity.

It belongs to the cytochrome P450 family. It depends on heme as a cofactor.

The protein is Putative cytochrome P450 135B1 (cyp135B1) of Mycobacterium bovis (strain ATCC BAA-935 / AF2122/97).